Here is a 73-residue protein sequence, read N- to C-terminus: uncharacterized protein (73 aa).

Positions 48 to 73 (AKEPEKKTPSMEAKATSLSPNKASAS) are disordered. The segment covering 63 to 73 (TSLSPNKASAS) has biased composition (polar residues).

This is an uncharacterized protein from Saccharomyces cerevisiae (strain ATCC 204508 / S288c) (Baker's yeast).